A 298-amino-acid polypeptide reads, in one-letter code: 4-diphosphocytidyl-2-C-methyl-D-erythritol kinase (298 aa).

The active site involves lysine 25. 109 to 119 (PVGGGFGGGSS) serves as a coordination point for ATP. The active site involves aspartate 151.

This sequence belongs to the GHMP kinase family. IspE subfamily.

The enzyme catalyses 4-CDP-2-C-methyl-D-erythritol + ATP = 4-CDP-2-C-methyl-D-erythritol 2-phosphate + ADP + H(+). Its pathway is isoprenoid biosynthesis; isopentenyl diphosphate biosynthesis via DXP pathway; isopentenyl diphosphate from 1-deoxy-D-xylulose 5-phosphate: step 3/6. Its function is as follows. Catalyzes the phosphorylation of the position 2 hydroxy group of 4-diphosphocytidyl-2C-methyl-D-erythritol. This chain is 4-diphosphocytidyl-2-C-methyl-D-erythritol kinase, found in Xylella fastidiosa (strain 9a5c).